An 851-amino-acid chain; its full sequence is Protein BCK2 (851 aa).

Residues 1–10 are compositionally biased toward basic residues; sequence MPKNSHHHRS. Disordered regions lie at residues 1–91, 233–271, 315–355, 466–504, and 698–722; these read MPKN…RKKS, EVVP…MNTK, SLSL…LPEE, FLDG…YITT, and HASR…PNNV. Residues 11-23 are compositionally biased toward low complexity; the sequence is SSVNSTKSRSTES. Polar residues predominate over residues 37–66; sequence ASGSTQASPDRNSSTGSCSTPVLPTMNVMS. The span at 71 to 81 shows a compositional bias: basic and acidic residues; that stretch reads VLLEDPRDNHT. Polar residues-rich tracts occupy residues 254–271, 334–349, 489–504, and 702–722; these read SETN…MNTK, SPRT…SQSK, ISDA…YITT, and SESN…PNNV. At serine 334 the chain carries Phosphoserine. Phosphoserine occurs at positions 757 and 761.

Dosage dependent suppressor of PKC1 deletion and MPK1 deletion. Involved in cell lysis. This chain is Protein BCK2 (BCK2), found in Saccharomyces cerevisiae (strain ATCC 204508 / S288c) (Baker's yeast).